A 346-amino-acid chain; its full sequence is HLA class I histocompatibility antigen, alpha chain F (346 aa).

A signal peptide spans 1 to 21 (MAPRSLLLLLSGALALTDTWA). Positions 22–111 (GSHSLRYFST…LLRRYNQSEA (90 aa)) are alpha-1. The Extracellular segment spans residues 22-305 (GSHSLRYFST…EQSPQPTIPI (284 aa)). Residues asparagine 91 and arginine 105 each contribute to the a peptide antigen site. An N-linked (GlcNAc...) asparagine glycan is attached at asparagine 107. The alpha-2 stretch occupies residues 112–203 (GSHTLQGMNG…ENGKETLQRA (92 aa)). Cystine bridges form between cysteine 122–cysteine 185 and cysteine 224–cysteine 280. A peptide antigen-binding residues include threonine 164, tyrosine 168, and glutamate 176. An alpha-3 region spans residues 204–295 (DPPKAHVAHH…GLPQPLILRW (92 aa)). In terms of domain architecture, Ig-like C1-type spans 206-296 (PKAHVAHHPI…LPQPLILRWE (91 aa)). The tract at residues 296–305 (EQSPQPTIPI) is connecting peptide. A helical membrane pass occupies residues 306–329 (VGIVAGLVVLGAVVTGAVVAAVMW). At 330–346 (RKKSSDRNRGSYSQAAV) the chain is on the cytoplasmic side. A Sorting signal sequence; Golgi-retention signal; ER-retention signal motif is present at residues 336–338 (RNR).

Belongs to the MHC class I family. As to quaternary structure, forms a heterotrimer with B2M and a self-peptide. Binds a diverse number of peptides ranging from 7 to more than 30 amino acids. Peptide-bound HLA-F-B2M interacts with LILRB1 and LILRB2 but not with KIR3DS1 or KIR3DL2; this interaction is direct. The OC form interacts with KIR3DS1, KIR2DS4 and KIR3DL2; this interaction is direct. Interacts with TAP1-TAP2 complex and CALR; this interaction is required for appropriate folding and peptide loading. Interacts with the coat protein complex II and 14-3-3 proteins; these interactions likely control the anterograde ER-to-Golgi transport of HLA-F. HLA-F-B2M complex interacts with the heavy chain of other MHC class I molecules including HLA-A and HLA-E; this interaction may regulate the intracellular trafficking and the stability of peptide-free MHC class I OCs. N-glycosylated. In terms of tissue distribution, expressed in resting B cells (at protein level). Expressed in secondary lymphoid organs rich in B and T cells such as the tonsils, spleen, and thymus (at protein level). Expressed in the endothelial cells of the tonsils. Expressed on activated lymphoid cells including B cells, NK cells, CD4+ T cells and memory T cells (at protein level). Expressed in motor neurons of spinal cord.

It localises to the cell membrane. It is found in the early endosome membrane. The protein localises to the lysosome membrane. In terms of biological role, non-classical major histocompatibility class Ib molecule postulated to play a role in immune surveillance, immune tolerance and inflammation. Functions in two forms, as a heterotrimeric complex with B2M/beta-2 microglobulin and a peptide (peptide-bound HLA-F-B2M) and as an open conformer (OC) devoid of peptide and B2M (peptide-free OC). In complex with B2M, presents non-canonical self-peptides carrying post-translational modifications, particularly phosphorylated self-peptides. Peptide-bound HLA-F-B2M acts as a ligand for LILRB1 inhibitory receptor, a major player in maternal-fetal tolerance. Peptide-free OC acts as a ligand for KIR3DS1 and KIR3DL2 receptors. Upon interaction with activating KIR3DS1 receptor on NK cells, triggers NK cell degranulation and anti-viral cytokine production. Through interaction with KIR3DL2 receptor, inhibits NK and T cell effector functions. May interact with other MHC class I OCs to cross-present exogenous viral, tumor or minor histompatibility antigens to cytotoxic CD8+ T cells, triggering effector and memory responses. May play a role in inflammatory responses in the peripheral nervous system. Through interaction with KIR3DL2, may protect motor neurons from astrocyte-induced toxicity. The polypeptide is HLA class I histocompatibility antigen, alpha chain F (Homo sapiens (Human)).